The following is a 378-amino-acid chain: Glutamate 5-kinase (378 aa).

Lys-20 contacts ATP. Positions 60, 147, and 159 each coordinate substrate. Residues 179 to 180 and 221 to 227 each bind ATP; these read TD and TGGMLTK. Positions 286 to 364 constitute a PUA domain; the sequence is RGRVVLDDGA…SQIARILGSM (79 aa).

It belongs to the glutamate 5-kinase family.

It is found in the cytoplasm. The catalysed reaction is L-glutamate + ATP = L-glutamyl 5-phosphate + ADP. It functions in the pathway amino-acid biosynthesis; L-proline biosynthesis; L-glutamate 5-semialdehyde from L-glutamate: step 1/2. Catalyzes the transfer of a phosphate group to glutamate to form L-glutamate 5-phosphate. This is Glutamate 5-kinase from Bordetella parapertussis (strain 12822 / ATCC BAA-587 / NCTC 13253).